A 463-amino-acid polypeptide reads, in one-letter code: Asparagine--tRNA ligase (463 aa).

Belongs to the class-II aminoacyl-tRNA synthetase family. Homodimer.

The protein localises to the cytoplasm. The enzyme catalyses tRNA(Asn) + L-asparagine + ATP = L-asparaginyl-tRNA(Asn) + AMP + diphosphate + H(+). The polypeptide is Asparagine--tRNA ligase (Clostridium novyi (strain NT)).